A 246-amino-acid chain; its full sequence is 1-(5-phosphoribosyl)-5-[(5-phosphoribosylamino)methylideneamino] imidazole-4-carboxamide isomerase (246 aa).

Residue Asp-8 is the Proton acceptor of the active site. Catalysis depends on Asp-130, which acts as the Proton donor.

The protein belongs to the HisA/HisF family.

The protein resides in the cytoplasm. It catalyses the reaction 1-(5-phospho-beta-D-ribosyl)-5-[(5-phospho-beta-D-ribosylamino)methylideneamino]imidazole-4-carboxamide = 5-[(5-phospho-1-deoxy-D-ribulos-1-ylimino)methylamino]-1-(5-phospho-beta-D-ribosyl)imidazole-4-carboxamide. It functions in the pathway amino-acid biosynthesis; L-histidine biosynthesis; L-histidine from 5-phospho-alpha-D-ribose 1-diphosphate: step 4/9. This Shigella dysenteriae serotype 1 (strain Sd197) protein is 1-(5-phosphoribosyl)-5-[(5-phosphoribosylamino)methylideneamino] imidazole-4-carboxamide isomerase.